The following is a 209-amino-acid chain: Large ribosomal subunit protein uL3 (209 aa).

N5-methylglutamine is present on glutamine 150.

The protein belongs to the universal ribosomal protein uL3 family. As to quaternary structure, part of the 50S ribosomal subunit. Forms a cluster with proteins L14 and L19. In terms of processing, methylated by PrmB.

One of the primary rRNA binding proteins, it binds directly near the 3'-end of the 23S rRNA, where it nucleates assembly of the 50S subunit. This is Large ribosomal subunit protein uL3 from Vibrio campbellii (strain ATCC BAA-1116).